Reading from the N-terminus, the 418-residue chain is 3-isopropylmalate dehydratase large subunit (418 aa).

[4Fe-4S] cluster contacts are provided by Cys299, Cys359, and Cys362.

Belongs to the aconitase/IPM isomerase family. LeuC type 2 subfamily. As to quaternary structure, heterodimer of LeuC and LeuD. It depends on [4Fe-4S] cluster as a cofactor.

The catalysed reaction is (2R,3S)-3-isopropylmalate = (2S)-2-isopropylmalate. Its pathway is amino-acid biosynthesis; L-leucine biosynthesis; L-leucine from 3-methyl-2-oxobutanoate: step 2/4. Functionally, catalyzes the isomerization between 2-isopropylmalate and 3-isopropylmalate, via the formation of 2-isopropylmaleate. The polypeptide is 3-isopropylmalate dehydratase large subunit (Nitratidesulfovibrio vulgaris (strain DSM 19637 / Miyazaki F) (Desulfovibrio vulgaris)).